Here is a 579-residue protein sequence, read N- to C-terminus: Adenine deaminase (579 aa).

Belongs to the metallo-dependent hydrolases superfamily. Adenine deaminase family. Requires Mn(2+) as cofactor.

The enzyme catalyses adenine + H2O + H(+) = hypoxanthine + NH4(+). The protein is Adenine deaminase of Listeria innocua serovar 6a (strain ATCC BAA-680 / CLIP 11262).